The following is a 280-amino-acid chain: Putative sugar uptake protein (280 aa).

10 helical membrane passes run 4–21 (LIAL…LIAG), 33–52 (MGLG…IHPA), 56–78 (ITIF…GQFI), 91–113 (LSTG…EWTS), 117–136 (YLIG…LTAI), 149–166 (IILL…SSFP), 176–195 (LFLP…LLVS), 207–229 (WLNI…SAQL), 233–255 (ITAF…FFIG), and 262–279 (ELIA…GAAI).

Belongs to the GRP transporter (TC 2.A.7.5) family.

It localises to the cell membrane. This is Putative sugar uptake protein from Lactobacillus helveticus (Lactobacillus suntoryeus).